Consider the following 85-residue polypeptide: uncharacterized protein (85 aa).

This sequence belongs to the SF3B5 family.

This is an uncharacterized protein from Schizosaccharomyces pombe (strain 972 / ATCC 24843) (Fission yeast).